We begin with the raw amino-acid sequence, 578 residues long: V-type ATP synthase alpha chain (578 aa).

228 to 235 (GPFGSGKT) lines the ATP pocket.

This sequence belongs to the ATPase alpha/beta chains family.

It catalyses the reaction ATP + H2O + 4 H(+)(in) = ADP + phosphate + 5 H(+)(out). In terms of biological role, produces ATP from ADP in the presence of a proton gradient across the membrane. The V-type alpha chain is a catalytic subunit. The protein is V-type ATP synthase alpha chain of Thermus thermophilus (strain ATCC BAA-163 / DSM 7039 / HB27).